The chain runs to 713 residues: Forkhead box protein P2 (713 aa).

Residues 1 to 28 (MMQESATETISNSSMNQNGMSTLSSQLD) are compositionally biased toward polar residues. 2 disordered regions span residues 1-44 (MMQE…SSEV) and 283-337 (KHGG…TGAS). Positions 290–303 (TTNNSSSTTSSTTS) are enriched in low complexity. A compositionally biased stretch (polar residues) spans 313-322 (SIVNGQSSVL). Residues 324–335 (ARRDSSSHEETG) show a composition bias toward basic and acidic residues. The segment at 344 to 369 (GVCKWPGCESICEDFGQFLKHLNNEH) adopts a C2H2-type zinc-finger fold. A leucine-zipper region spans residues 386-407 (VQQLEIQLSKERERLQAMMTHL). The CTBP1-binding stretch occupies residues 420–424 (PLNLV). Positions 436-457 (TSPQSLPQTPTTPTAPVTPITQ) are enriched in low complexity. The disordered stretch occupies residues 436-463 (TSPQSLPQTPTTPTAPVTPITQGPSVIT). Positions 502-592 (RPPFTYATLI…SQKITGSPTL (91 aa)) form a DNA-binding region, fork-head. 2 disordered regions span residues 647-666 (LDHI…QPHI) and 676-713 (VIAE…EDLE). Acidic residues predominate over residues 697–713 (LEDDREIEEEPLSEDLE).

As to quaternary structure, forms homodimers and heterodimers with FOXP1 and FOXP4. Dimerization is required for DNA-binding. Interacts with CTBP1. Interacts with FOXP1. Interacts with TBR1. Interacts with ZMYM2.

Its subcellular location is the nucleus. Its function is as follows. Transcriptional repressor that may play a role in the specification and differentiation of lung epithelium. May also play a role in developing neural, gastrointestinal and cardiovascular tissues. Can act with CTBP1 to synergistically repress transcription but CTPBP1 is not essential. Plays a role in synapse formation by regulating SRPX2 levels. The chain is Forkhead box protein P2 (FOXP2) from Gorilla gorilla gorilla (Western lowland gorilla).